Consider the following 268-residue polypeptide: MLFDLFKALVLGIVEGVTEFLPVSSTGHILLAERIFDLDQDNFWKTFAVLIQLGAILAILAIYFQRLWRVATHMFTDPAARRFVIGVLVAFLPAVILGLIFGTFIKEVLFNPWVVCFSLIAGGAVLLWVDQQDVNPRHHDAMAFPLPMYLGIGIAQCAAMVPGVSRSGASIVAAMLFGADKRAAAEFSFFLAIPTMLGAFVYDVYKSRGDMTMDHAFIIIVGFVVSFITAIVVVKTFLDFVTKNGFTFFAWWRVIVGTLGLIALALGA.

A run of 7 helical transmembrane segments spans residues 43–63 (FWKT…LAIY), 85–105 (IGVL…GTFI), 108–128 (VLFN…VLLW), 141–161 (AMAF…AAMV), 184–204 (AAEF…VYDV), 217–237 (FIII…VKTF), and 246–266 (FTFF…ALAL).

This sequence belongs to the UppP family.

Its subcellular location is the cell inner membrane. It carries out the reaction di-trans,octa-cis-undecaprenyl diphosphate + H2O = di-trans,octa-cis-undecaprenyl phosphate + phosphate + H(+). In terms of biological role, catalyzes the dephosphorylation of undecaprenyl diphosphate (UPP). Confers resistance to bacitracin. The sequence is that of Undecaprenyl-diphosphatase from Afipia carboxidovorans (strain ATCC 49405 / DSM 1227 / KCTC 32145 / OM5) (Oligotropha carboxidovorans).